Reading from the N-terminus, the 55-residue chain is Large ribosomal subunit protein eL40 (55 aa).

It belongs to the eukaryotic ribosomal protein eL40 family.

The polypeptide is Large ribosomal subunit protein eL40 (Ignicoccus hospitalis (strain KIN4/I / DSM 18386 / JCM 14125)).